Reading from the N-terminus, the 173-residue chain is Propanediol dehydratase small subunit (173 aa).

This sequence belongs to the diol/glycerol dehydratase small subunit family. In terms of assembly, the propanediol dehydratase enzyme is a heterotrimeric complex composed of a large (PduC), a medium (PduD) and a small (PduE) subunit. Adenosylcob(III)alamin serves as cofactor.

Its subcellular location is the bacterial microcompartment. The enzyme catalyses propane-1,2-diol = propanal + H2O. It participates in polyol metabolism; 1,2-propanediol degradation. Inhibited by glycerol. Part of the PduCDE complex that catalyzes the dehydration of 1,2-propanediol (1,2-PD) to propionaldehyde. Required for S.typhimurium growth on 1,2-PD as the sole carbon and energy source. Localized in the bacterial microcompartment (BMC) dedicated to 1,2-PD degradation. Its function is as follows. The 1,2-PD-specific bacterial microcompartment (BMC) concentrates low levels of 1,2-PD catabolic enzymes, concentrates volatile reaction intermediates thus enhancing pathway flux and keeps the level of toxic, mutagenic propionaldehyde low. In Salmonella typhimurium (strain LT2 / SGSC1412 / ATCC 700720), this protein is Propanediol dehydratase small subunit.